Reading from the N-terminus, the 54-residue chain is Preprotein translocase subunit SecG (54 aa).

At Met1–Asp31 the chain is on the cytoplasmic side. The chain crosses the membrane as a helical span at residues Pro32 to Val53. A topological domain (extracellular) is located at residue Ala54.

The protein belongs to the SEC61-beta family. In terms of assembly, component of the protein translocase complex. Heterotrimer consisting of alpha (SecY), beta (SecG) and gamma (SecE) subunits. Can form oligomers of the heterotrimer.

The protein localises to the cell membrane. Functionally, involved in protein export. The function of the beta subunit is unknown, but it may be involved in stabilization of the trimeric complex. The sequence is that of Preprotein translocase subunit SecG from Halorubrum lacusprofundi (strain ATCC 49239 / DSM 5036 / JCM 8891 / ACAM 34).